The primary structure comprises 98 residues: DNA-binding protein Fis (98 aa).

The segment at residues 74-93 is a DNA-binding region (H-T-H motif); the sequence is QTRAALMMGINRGTLRKKLK.

Belongs to the transcriptional regulatory Fis family. As to quaternary structure, homodimer.

Activates ribosomal RNA transcription. Plays a direct role in upstream activation of rRNA promoters. In Yersinia enterocolitica serotype O:8 / biotype 1B (strain NCTC 13174 / 8081), this protein is DNA-binding protein Fis.